Consider the following 305-residue polypeptide: Ornithine carbamoyltransferase (305 aa).

Carbamoyl phosphate-binding positions include 52-55 (STRT), Gln-79, Arg-103, and 130-133 (HPCQ). Residues Asn-161, Asp-222, and 226-227 (SM) contribute to the L-ornithine site. Residues 262–263 (CL) and Arg-290 each bind carbamoyl phosphate.

It belongs to the aspartate/ornithine carbamoyltransferase superfamily. OTCase family.

It is found in the cytoplasm. The enzyme catalyses carbamoyl phosphate + L-ornithine = L-citrulline + phosphate + H(+). It participates in amino-acid biosynthesis; L-arginine biosynthesis; L-arginine from L-ornithine and carbamoyl phosphate: step 1/3. In terms of biological role, reversibly catalyzes the transfer of the carbamoyl group from carbamoyl phosphate (CP) to the N(epsilon) atom of ornithine (ORN) to produce L-citrulline. This is Ornithine carbamoyltransferase from Pelobacter propionicus (strain DSM 2379 / NBRC 103807 / OttBd1).